The chain runs to 449 residues: Glucose-6-phosphate isomerase (449 aa).

The Proton donor role is filled by Glu291. Catalysis depends on residues His312 and Lys426.

It belongs to the GPI family.

It localises to the cytoplasm. The enzyme catalyses alpha-D-glucose 6-phosphate = beta-D-fructose 6-phosphate. The protein operates within carbohydrate biosynthesis; gluconeogenesis. Its pathway is carbohydrate degradation; glycolysis; D-glyceraldehyde 3-phosphate and glycerone phosphate from D-glucose: step 2/4. Its function is as follows. Catalyzes the reversible isomerization of glucose-6-phosphate to fructose-6-phosphate. The polypeptide is Glucose-6-phosphate isomerase (Streptococcus pyogenes serotype M1).